The chain runs to 402 residues: Arginine deiminase (402 aa).

Catalysis depends on Cys-392, which acts as the Amidino-cysteine intermediate.

This sequence belongs to the arginine deiminase family.

The protein localises to the cytoplasm. The enzyme catalyses L-arginine + H2O = L-citrulline + NH4(+). Its pathway is amino-acid degradation; L-arginine degradation via ADI pathway; carbamoyl phosphate from L-arginine: step 1/2. In Mycobacterium avium (strain 104), this protein is Arginine deiminase.